Reading from the N-terminus, the 457-residue chain is Methylenetetrahydrofolate--tRNA-(uracil-5-)-methyltransferase TrmFO (457 aa).

Position 8–13 (8–13) interacts with FAD; that stretch reads GGGLAG.

This sequence belongs to the MnmG family. TrmFO subfamily. It depends on FAD as a cofactor.

The protein localises to the cytoplasm. It carries out the reaction uridine(54) in tRNA + (6R)-5,10-methylene-5,6,7,8-tetrahydrofolate + NADH + H(+) = 5-methyluridine(54) in tRNA + (6S)-5,6,7,8-tetrahydrofolate + NAD(+). The catalysed reaction is uridine(54) in tRNA + (6R)-5,10-methylene-5,6,7,8-tetrahydrofolate + NADPH + H(+) = 5-methyluridine(54) in tRNA + (6S)-5,6,7,8-tetrahydrofolate + NADP(+). In terms of biological role, catalyzes the folate-dependent formation of 5-methyl-uridine at position 54 (M-5-U54) in all tRNAs. The polypeptide is Methylenetetrahydrofolate--tRNA-(uracil-5-)-methyltransferase TrmFO (Thermosynechococcus vestitus (strain NIES-2133 / IAM M-273 / BP-1)).